Here is a 112-residue protein sequence, read N- to C-terminus: Large ribosomal subunit protein uL22 (112 aa).

This sequence belongs to the universal ribosomal protein uL22 family. As to quaternary structure, part of the 50S ribosomal subunit.

Functionally, this protein binds specifically to 23S rRNA; its binding is stimulated by other ribosomal proteins, e.g. L4, L17, and L20. It is important during the early stages of 50S assembly. It makes multiple contacts with different domains of the 23S rRNA in the assembled 50S subunit and ribosome. The globular domain of the protein is located near the polypeptide exit tunnel on the outside of the subunit, while an extended beta-hairpin is found that lines the wall of the exit tunnel in the center of the 70S ribosome. The sequence is that of Large ribosomal subunit protein uL22 from Nitratidesulfovibrio vulgaris (strain ATCC 29579 / DSM 644 / CCUG 34227 / NCIMB 8303 / VKM B-1760 / Hildenborough) (Desulfovibrio vulgaris).